The sequence spans 350 residues: Protein RecA (350 aa).

68 to 75 (GPESSGKT) contacts ATP.

This sequence belongs to the RecA family.

Its subcellular location is the cytoplasm. In terms of biological role, can catalyze the hydrolysis of ATP in the presence of single-stranded DNA, the ATP-dependent uptake of single-stranded DNA by duplex DNA, and the ATP-dependent hybridization of homologous single-stranded DNAs. It interacts with LexA causing its activation and leading to its autocatalytic cleavage. In Mycolicibacterium gilvum (strain PYR-GCK) (Mycobacterium gilvum (strain PYR-GCK)), this protein is Protein RecA.